Here is a 537-residue protein sequence, read N- to C-terminus: uncharacterized protein (537 aa).

This is an uncharacterized protein from Mycobacterium bovis (strain ATCC BAA-935 / AF2122/97).